We begin with the raw amino-acid sequence, 699 residues long: Elongation factor G (699 aa).

Residues 8 to 283 (EHIRNIGICA…AVVDFLPSPI (276 aa)) enclose the tr-type G domain. Residues 17 to 24 (AHIDAGKT), 81 to 85 (DTPGH), and 135 to 138 (NKMD) contribute to the GTP site.

The protein belongs to the TRAFAC class translation factor GTPase superfamily. Classic translation factor GTPase family. EF-G/EF-2 subfamily.

Its subcellular location is the cytoplasm. In terms of biological role, catalyzes the GTP-dependent ribosomal translocation step during translation elongation. During this step, the ribosome changes from the pre-translocational (PRE) to the post-translocational (POST) state as the newly formed A-site-bound peptidyl-tRNA and P-site-bound deacylated tRNA move to the P and E sites, respectively. Catalyzes the coordinated movement of the two tRNA molecules, the mRNA and conformational changes in the ribosome. The sequence is that of Elongation factor G from Rickettsia felis (strain ATCC VR-1525 / URRWXCal2) (Rickettsia azadi).